A 326-amino-acid polypeptide reads, in one-letter code: Ribose operon repressor (326 aa).

The region spanning M1–K56 is the HTH lacI-type domain. Residues I4–N23 constitute a DNA-binding region (H-T-H motif).

In terms of biological role, transcriptional repressor for the ribose rbsDACBK operon. The chain is Ribose operon repressor (rbsR) from Bacillus subtilis (strain 168).